Reading from the N-terminus, the 481-residue chain is Proline--tRNA ligase 2 (481 aa).

This sequence belongs to the class-II aminoacyl-tRNA synthetase family. ProS type 3 subfamily. As to quaternary structure, homodimer.

It localises to the cytoplasm. It catalyses the reaction tRNA(Pro) + L-proline + ATP = L-prolyl-tRNA(Pro) + AMP + diphosphate. Its function is as follows. Catalyzes the attachment of proline to tRNA(Pro) in a two-step reaction: proline is first activated by ATP to form Pro-AMP and then transferred to the acceptor end of tRNA(Pro). The protein is Proline--tRNA ligase 2 of Clostridioides difficile (strain 630) (Peptoclostridium difficile).